A 267-amino-acid chain; its full sequence is MTQIHPTALVDPKAELAADVTVGPFSIVGPNVRIGSGTSIGAHSTVEGHTTIGQGNNIGPYASVGGVPQDMKYRNEPTRLDIGDRNTIREFTTIHTGTVQDRGVTTIGSDNWIMAYVHIAHDCTVGNHTVFSSNAQIAGHVEVGDWAILGGMSGVHQFVRIGAHAMLGGASALVQDVPPFVIAASDKNGNKATPHGINVEGLRRRGFDAGQIAGLRQAYKLLYKSDLSFDEARNEIAALLAQADASAAEPLRAFLDFIAATQRGIVR.

Belongs to the transferase hexapeptide repeat family. LpxA subfamily. In terms of assembly, homotrimer.

Its subcellular location is the cytoplasm. It carries out the reaction a (3R)-hydroxyacyl-[ACP] + UDP-N-acetyl-alpha-D-glucosamine = a UDP-3-O-[(3R)-3-hydroxyacyl]-N-acetyl-alpha-D-glucosamine + holo-[ACP]. It functions in the pathway glycolipid biosynthesis; lipid IV(A) biosynthesis; lipid IV(A) from (3R)-3-hydroxytetradecanoyl-[acyl-carrier-protein] and UDP-N-acetyl-alpha-D-glucosamine: step 1/6. Its function is as follows. Involved in the biosynthesis of lipid A, a phosphorylated glycolipid that anchors the lipopolysaccharide to the outer membrane of the cell. This Cupriavidus pinatubonensis (strain JMP 134 / LMG 1197) (Cupriavidus necator (strain JMP 134)) protein is Acyl-[acyl-carrier-protein]--UDP-N-acetylglucosamine O-acyltransferase.